We begin with the raw amino-acid sequence, 180 residues long: MLVVKIAVPYAEALLELANANSSLKETTNDINIVSQFLANSSDLKKFLGNPLITRDAKKGVLKDVLGEQIGEKTLTFLMLLVDRGRIAYLDGIAYKFLELSYKEESIEIAKVTSSVQLSAQQQKTIAEKLKKITGAKQIKLALKVDPQLIGGFTIEIGSKLIDTSIRGQLKQISTLLGAV.

Belongs to the ATPase delta chain family. As to quaternary structure, F-type ATPases have 2 components, F(1) - the catalytic core - and F(0) - the membrane proton channel. F(1) has five subunits: alpha(3), beta(3), gamma(1), delta(1), epsilon(1). CF(0) has four main subunits: a(1), b(1), b'(1) and c(10-14). The alpha and beta chains form an alternating ring which encloses part of the gamma chain. F(1) is attached to F(0) by a central stalk formed by the gamma and epsilon chains, while a peripheral stalk is formed by the delta, b and b' chains.

The protein localises to the plastid. The protein resides in the chloroplast thylakoid membrane. Functionally, f(1)F(0) ATP synthase produces ATP from ADP in the presence of a proton or sodium gradient. F-type ATPases consist of two structural domains, F(1) containing the extramembraneous catalytic core and F(0) containing the membrane proton channel, linked together by a central stalk and a peripheral stalk. During catalysis, ATP synthesis in the catalytic domain of F(1) is coupled via a rotary mechanism of the central stalk subunits to proton translocation. This protein is part of the stalk that links CF(0) to CF(1). It either transmits conformational changes from CF(0) to CF(1) or is implicated in proton conduction. This Emiliania huxleyi (Coccolithophore) protein is ATP synthase subunit delta, chloroplastic.